Here is a 1040-residue protein sequence, read N- to C-terminus: Multidrug resistance protein MdtB (1040 aa).

Helical transmembrane passes span 16–36, 347–367, 369–389, 396–416, 440–460, 472–492, 537–557, 863–883, 888–908, 911–931, 968–988, and 998–1018; these read FIMRPVATTLLMVAILLAGII, LMMAITLVVMIIYLFLRNIPA, IIPGVAVPLSLIGTFAVMVFL, LTLMALTIATGFVVDDAIVVI, IGFTIISLTFSLIAVLIPLLF, FAITLAVAILISAVVSLTLTP, WLTLSVALSTLLLSVLLWVFI, LGSTVWLIVAAVVAMYIVLGI, FIHPITILSTLPTAGVGALLA, IAGSELDVIAIIGIILLIGIV, ILMTTLAALLGALPLMLSTGV, and IGMVGGLIVSQVLTLFTTPVI.

It belongs to the resistance-nodulation-cell division (RND) (TC 2.A.6) family. MdtB subfamily. Part of a tripartite efflux system composed of MdtA, MdtB and MdtC. MdtB forms a heteromultimer with MdtC.

The protein resides in the cell inner membrane. Functionally, the MdtABC tripartite complex confers resistance against novobiocin and deoxycholate. The protein is Multidrug resistance protein MdtB of Escherichia coli O157:H7 (strain EC4115 / EHEC).